Reading from the N-terminus, the 109-residue chain is Large ribosomal subunit protein uL22 (109 aa).

The protein belongs to the universal ribosomal protein uL22 family. In terms of assembly, part of the 50S ribosomal subunit.

Functionally, this protein binds specifically to 23S rRNA; its binding is stimulated by other ribosomal proteins, e.g. L4, L17, and L20. It is important during the early stages of 50S assembly. It makes multiple contacts with different domains of the 23S rRNA in the assembled 50S subunit and ribosome. Its function is as follows. The globular domain of the protein is located near the polypeptide exit tunnel on the outside of the subunit, while an extended beta-hairpin is found that lines the wall of the exit tunnel in the center of the 70S ribosome. The protein is Large ribosomal subunit protein uL22 of Methylibium petroleiphilum (strain ATCC BAA-1232 / LMG 22953 / PM1).